We begin with the raw amino-acid sequence, 726 residues long: Ribonuclease R (726 aa).

The RNB domain occupies 264-592; sequence RKDLTELAFV…TVHRLLWMNL (329 aa). In terms of domain architecture, S1 motif spans 645 to 726; that stretch reads GQTFHGFISA…VQKRAILTLV (82 aa).

The protein belongs to the RNR ribonuclease family. RNase R subfamily.

Its subcellular location is the cytoplasm. It catalyses the reaction Exonucleolytic cleavage in the 3'- to 5'-direction to yield nucleoside 5'-phosphates.. Functionally, 3'-5' exoribonuclease that releases 5'-nucleoside monophosphates and is involved in maturation of structured RNAs. The polypeptide is Ribonuclease R (Mycoplasma pneumoniae (strain ATCC 29342 / M129 / Subtype 1) (Mycoplasmoides pneumoniae)).